The following is a 345-amino-acid chain: Holliday junction branch migration complex subunit RuvB (345 aa).

Residues 4–194 (TDKLFGAAPE…FGIVARLEFY (191 aa)) form a large ATPase domain (RuvB-L) region. ATP is bound by residues L33, R34, G75, K78, T79, T80, 141–143 (EDY), R184, Y194, and R231. Mg(2+) is bound at residue T79. Residues 195 to 265 (NAEELTRIVS…VADAALAMLD (71 aa)) are small ATPAse domain (RuvB-S). The tract at residues 268 to 345 (PAGLDVMDRK…LHFGLPVKDA (78 aa)) is head domain (RuvB-H). Residues R323 and R328 each coordinate DNA.

It belongs to the RuvB family. As to quaternary structure, homohexamer. Forms an RuvA(8)-RuvB(12)-Holliday junction (HJ) complex. HJ DNA is sandwiched between 2 RuvA tetramers; dsDNA enters through RuvA and exits via RuvB. An RuvB hexamer assembles on each DNA strand where it exits the tetramer. Each RuvB hexamer is contacted by two RuvA subunits (via domain III) on 2 adjacent RuvB subunits; this complex drives branch migration. In the full resolvosome a probable DNA-RuvA(4)-RuvB(12)-RuvC(2) complex forms which resolves the HJ.

It is found in the cytoplasm. The catalysed reaction is ATP + H2O = ADP + phosphate + H(+). In terms of biological role, the RuvA-RuvB-RuvC complex processes Holliday junction (HJ) DNA during genetic recombination and DNA repair, while the RuvA-RuvB complex plays an important role in the rescue of blocked DNA replication forks via replication fork reversal (RFR). RuvA specifically binds to HJ cruciform DNA, conferring on it an open structure. The RuvB hexamer acts as an ATP-dependent pump, pulling dsDNA into and through the RuvAB complex. RuvB forms 2 homohexamers on either side of HJ DNA bound by 1 or 2 RuvA tetramers; 4 subunits per hexamer contact DNA at a time. Coordinated motions by a converter formed by DNA-disengaged RuvB subunits stimulates ATP hydrolysis and nucleotide exchange. Immobilization of the converter enables RuvB to convert the ATP-contained energy into a lever motion, pulling 2 nucleotides of DNA out of the RuvA tetramer per ATP hydrolyzed, thus driving DNA branch migration. The RuvB motors rotate together with the DNA substrate, which together with the progressing nucleotide cycle form the mechanistic basis for DNA recombination by continuous HJ branch migration. Branch migration allows RuvC to scan DNA until it finds its consensus sequence, where it cleaves and resolves cruciform DNA. In Chromobacterium violaceum (strain ATCC 12472 / DSM 30191 / JCM 1249 / CCUG 213 / NBRC 12614 / NCIMB 9131 / NCTC 9757 / MK), this protein is Holliday junction branch migration complex subunit RuvB.